Here is a 329-residue protein sequence, read N- to C-terminus: Alpha/beta hydrolase domain-containing protein 17C (329 aa).

Residues 53-79 are compositionally biased toward low complexity; sequence GASAPAPAQATAAAAAAQPAPQQPEEG. The interval 53–85 is disordered; it reads GASAPAPAQATAAAAAAQPAPQQPEEGAGAGPG. Catalysis depends on charge relay system residues Ser211, Asp276, and His305.

This sequence belongs to the AB hydrolase superfamily. ABHD17 family. Post-translationally, palmitoylated on cysteine residues located in a cysteine cluster at the N-terminus which promotes membrane localization. Palmitoylation is required for post-synaptic localization and for depalmitoylating activity towards DLG4/PSD95.

The protein resides in the recycling endosome membrane. It is found in the cell projection. The protein localises to the dendritic spine. It localises to the postsynaptic density membrane. The catalysed reaction is S-hexadecanoyl-L-cysteinyl-[protein] + H2O = L-cysteinyl-[protein] + hexadecanoate + H(+). Inhibited by palmostatin-B. In terms of biological role, hydrolyzes fatty acids from S-acylated cysteine residues in proteins. Has depalmitoylating activity towards NRAS and DLG4/PSD95. In Homo sapiens (Human), this protein is Alpha/beta hydrolase domain-containing protein 17C.